A 548-amino-acid polypeptide reads, in one-letter code: GLC7-interacting protein 2 (548 aa).

The span at 1-23 (MYIKAEQKPQQFERKNEKLDRNK) shows a compositional bias: basic and acidic residues. 2 disordered regions span residues 1-54 (MYIK…STEE) and 118-143 (VESL…STVP). Ser51 bears the Phosphoserine mark. The residue at position 52 (Thr52) is a Phosphothreonine. Residue Ser155 is modified to Phosphoserine. A disordered region spans residues 191-212 (RSKSLPTTPGIRSGNGVQARDG). Ser221 and Ser238 each carry phosphoserine. Residues 293-346 (FAHPAKISNPNNGKGTNNTKLRKSKRFQNLLKNRTDMPPSKSNKKFVNGGGAHE) are disordered. Residues 419-534 (HNGNDCNGVA…NNNGNNYKVD (116 aa)) enclose the CBM21 domain.

As to quaternary structure, interacts with phosphatase 1 (GLC7).

This is GLC7-interacting protein 2 (GIP2) from Saccharomyces cerevisiae (strain ATCC 204508 / S288c) (Baker's yeast).